A 1010-amino-acid polypeptide reads, in one-letter code: BrkA autotransporter (1010 aa).

Positions 1–42 are cleaved as a signal peptide; it reads MYLDRFRQCPSSLQIPRSAWRLHALAAALALAGMARLAPAAA. The 269-residue stretch at 742-1010 folds into the Autotransporter domain; sequence LRADAGGPWA…SFHAGYRYSF (269 aa).

Its subcellular location is the periplasm. It is found in the secreted. The protein resides in the cell surface. It localises to the cell outer membrane. In terms of biological role, inhibits the classical pathway of complement activation and prevents accumulation of deposited C4. This Bordetella pertussis (strain Tohama I / ATCC BAA-589 / NCTC 13251) protein is BrkA autotransporter.